The sequence spans 311 residues: Aspartate carbamoyltransferase catalytic subunit (311 aa).

Residues Arg-59 and Thr-60 each coordinate carbamoyl phosphate. L-aspartate is bound at residue Lys-87. 3 residues coordinate carbamoyl phosphate: Arg-109, His-139, and Gln-142. L-aspartate contacts are provided by Arg-172 and Arg-224. The carbamoyl phosphate site is built by Ala-265 and Pro-266.

The protein belongs to the aspartate/ornithine carbamoyltransferase superfamily. ATCase family. In terms of assembly, heterododecamer (2C3:3R2) of six catalytic PyrB chains organized as two trimers (C3), and six regulatory PyrI chains organized as three dimers (R2).

It carries out the reaction carbamoyl phosphate + L-aspartate = N-carbamoyl-L-aspartate + phosphate + H(+). It participates in pyrimidine metabolism; UMP biosynthesis via de novo pathway; (S)-dihydroorotate from bicarbonate: step 2/3. Its function is as follows. Catalyzes the condensation of carbamoyl phosphate and aspartate to form carbamoyl aspartate and inorganic phosphate, the committed step in the de novo pyrimidine nucleotide biosynthesis pathway. This Streptococcus pyogenes serotype M18 (strain MGAS8232) protein is Aspartate carbamoyltransferase catalytic subunit.